We begin with the raw amino-acid sequence, 226 residues long: UPF0319 protein SO_1816 (226 aa).

A signal peptide spans 1 to 21; it reads MKSLLPISSLLVLLGSASVSA.

This sequence belongs to the UPF0319 family.

This is UPF0319 protein SO_1816 from Shewanella oneidensis (strain ATCC 700550 / JCM 31522 / CIP 106686 / LMG 19005 / NCIMB 14063 / MR-1).